Consider the following 118-residue polypeptide: NADH-quinone oxidoreductase subunit A (118 aa).

The next 3 helical transmembrane spans lie at 5 to 25 (FAAV…MMLM), 61 to 81 (FLYA…FPWA), and 90 to 110 (FAFI…WYAW).

It belongs to the complex I subunit 3 family. NDH-1 is composed of 14 different subunits. Subunits NuoA, H, J, K, L, M, N constitute the membrane sector of the complex.

The protein localises to the cell membrane. It catalyses the reaction a quinone + NADH + 5 H(+)(in) = a quinol + NAD(+) + 4 H(+)(out). NDH-1 shuttles electrons from NADH, via FMN and iron-sulfur (Fe-S) centers, to quinones in the respiratory chain. The immediate electron acceptor for the enzyme in this species is believed to be a menaquinone. Couples the redox reaction to proton translocation (for every two electrons transferred, four hydrogen ions are translocated across the cytoplasmic membrane), and thus conserves the redox energy in a proton gradient. The protein is NADH-quinone oxidoreductase subunit A of Desulfitobacterium hafniense (strain Y51).